Reading from the N-terminus, the 174-residue chain is Ribulose bisphosphate carboxylase small subunit, chloroplastic (174 aa).

The transit peptide at 1-45 directs the protein to the chloroplast; that stretch reads MAPTVMASSATSVAPFQGLKSTAGLPVSRRSNASSASVSNGGRIR.

This sequence belongs to the RuBisCO small chain family. As to quaternary structure, heterohexadecamer of 8 large and 8 small subunits.

Its subcellular location is the plastid. It localises to the chloroplast. Functionally, ruBisCO catalyzes two reactions: the carboxylation of D-ribulose 1,5-bisphosphate, the primary event in carbon dioxide fixation, as well as the oxidative fragmentation of the pentose substrate. Both reactions occur simultaneously and in competition at the same active site. Although the small subunit is not catalytic it is essential for maximal activity. This Hordeum vulgare (Barley) protein is Ribulose bisphosphate carboxylase small subunit, chloroplastic.